Consider the following 1173-residue polypeptide: MARYTQRPENALKRANEFIEVGKPLRALDTLQEVFRNKRWNYAYSETVIEPLMFKYLYLCVELKKSHIAKEGLFQYRNMFQLVNVNSLENVIRGYLKMAEEHTEAAQAQSSAAVAVLELDDLDNIATPESILMSAVCGEDAQDRSDRTILLPWVKFLWESYCQCLELLRVNTHCEALYHDIARMAFQFCLKYNRKSEFRRLCDKLRKHLEDICKSSNQTTGVSINKVETQQLCLDTRLYLLDSAIQMELWQEAYKAIEDIHGLMALSKKTPVPKTMANYYQKLAMVFSKAGNQLFHAAALLKLFQLTRELKKNLTKDDLQRMAAHVLLATLSIPLPSAHPEFDRFIEADKSPLEKAQKLAVLLGLPQPPTRVSLIREVVRLNVPQLVSEDFRNLYNWLEVDFNPLNLCKRIQSIVDIIETGPTETNLLSPYIQSLKDVTIMRLIRQISQVYESIEFKRLLELATFCNIFELEKLLVESVRHNDMQIRIDHQKNSIYFGTDLTESQREYRPDGPALQSMPSEQIRSQLVNMSTVLTRAVSIVYPNRERDQRAKLRTQMVHHYHEIKDREHQRILQRQKIIEDRKEYIEKQNNAREEEEARRQEEESRKAKLAEQKRLELEQEERERKRHQNEIQAIKEKSLKEKVQQISQTAHGKKMLSKLDEEGIKKLDAEQIAKRESEELQRERKELQSKLKSQEKKIDYYERAKRLEEIPLFEKYLAEKQVKDKEFWEATEKTRIENAIAERKDAVSQQERLKRMYPDRDEFLEALKKERASLYVEKLKKFEIALEAERKKRLADRVIRRREERRQAFLREKEEERLRKEEEIRLAQAAEERAAAEARRLEREAEDEKRRAQYEKQRAKEEEAERKIKEDRDRLAREVAVERERSDKERDTWRPRGGDRPSAAAAGGGGGAGEWRRAAAPIGDRNERAGDRIERGGERMERGGDRMERGGDRMERGGERTERGGDRMDRGGERMDRGGERGERGADRDRERRDNEGADSSWRVRREPDSQRGAGVKDASGSAAPPSRDDKWRRGGDRDRDRDRDFRNDGPRRDRDDRDDRDRGGFRRNDGPRRNDDAAPRETGGNWRDAPRQSDRDNRRPAGDRRDREVRGGDLRGPESRAPKEGGPSGGTGTAAGGGGNWRTAPGPRDEPAPKRDQPQDKGKFSLTPVQL.

Positions 319–502 (LQRMAAHVLL…NSIYFGTDLT (184 aa)) constitute a PCI domain. 2 disordered regions span residues 589 to 613 (QNNA…LAEQ) and 836 to 1173 (AAEA…PVQL). 4 stretches are compositionally biased toward basic and acidic residues: residues 836 to 900 (AAEA…RGGD), 925 to 1011 (DRNE…EPDS), 1028 to 1081 (SRDD…DAAP), and 1090 to 1125 (DAPR…RAPK). Positions 1128 to 1142 (GPSGGTGTAAGGGGN) are enriched in gly residues. Residues 1149–1165 (PRDEPAPKRDQPQDKGK) show a composition bias toward basic and acidic residues.

The protein belongs to the eIF-3 subunit A family. In terms of assembly, component of the eukaryotic translation initiation factor 3 (eIF-3) complex. The eIF-3 complex interacts with pix.

It localises to the cytoplasm. Functionally, RNA-binding component of the eukaryotic translation initiation factor 3 (eIF-3) complex, which is involved in protein synthesis of a specialized repertoire of mRNAs and, together with other initiation factors, stimulates binding of mRNA and methionyl-tRNAi to the 40S ribosome. The eIF-3 complex specifically targets and initiates translation of a subset of mRNAs involved in cell proliferation. The sequence is that of Eukaryotic translation initiation factor 3 subunit A from Drosophila persimilis (Fruit fly).